Reading from the N-terminus, the 518-residue chain is Coiled-coil domain-containing protein 82 (518 aa).

Over residues 1 to 14 the composition is skewed to basic residues; that stretch reads MVHVRRHETRKNSK. Residues 1–266 are disordered; sequence MVHVRRHETR…EDDYRYDEDG (266 aa). Over residues 16–27 the composition is skewed to basic and acidic residues; it reads QKPEQKSRVDWH. The segment covering 38–67 has biased composition (acidic residues); it reads DSDEELDSNEELDSDEEHDSGESIDSDEEL. The span at 68 to 89 shows a compositional bias: basic and acidic residues; sequence DISKKSDINELPEKETELKLIK. Over residues 92–107 the composition is skewed to polar residues; the sequence is SQGSNSKHLTNTSNSS. Over residues 111-127 the composition is skewed to basic and acidic residues; the sequence is EQLKETKHNDLPDDEAH. Residues Ser-170 and Ser-194 each carry the phosphoserine modification. Acidic residues predominate over residues 191–201; that stretch reads DECSSLEMEQE. Thr-202 is modified (phosphothreonine). Residues 204-232 adopt a coiled-coil conformation; the sequence is EKSSAARKREYHQKLQELSERSRQRRRRN. Residues 215-225 show a composition bias toward basic and acidic residues; the sequence is HQKLQELSERS. The span at 249 to 266 shows a compositional bias: acidic residues; sequence GEEDEDEDEDDYRYDEDG. Ser-305 is subject to Phosphoserine.

The chain is Coiled-coil domain-containing protein 82 (Ccdc82) from Mus musculus (Mouse).